We begin with the raw amino-acid sequence, 1039 residues long: Multidrug resistance protein MdtB (1039 aa).

12 helical membrane-spanning segments follow: residues 16-36 (FILR…AGII), 342-362 (DVQF…YVFL), 373-393 (VAVP…GFSI), 396-416 (LTLM…IVVI), 440-460 (IGFT…PLLF), 472-492 (FAVT…TLTP), 537-557 (WLTL…YLLI), 863-883 (LGGT…VLGV), 888-908 (FIHP…ALLA), 911-931 (MAGS…IGIV), 968-988 (ILMT…STGV), and 1002-1022 (GGLV…YLLF).

The protein belongs to the resistance-nodulation-cell division (RND) (TC 2.A.6) family. MdtB subfamily. In terms of assembly, part of a tripartite efflux system composed of MdtA, MdtB and MdtC. MdtB forms a heteromultimer with MdtC.

The protein resides in the cell inner membrane. This chain is Multidrug resistance protein MdtB, found in Serratia proteamaculans (strain 568).